The following is a 153-amino-acid chain: Cyanate hydratase (153 aa).

Active-site residues include R88, E91, and S114.

Belongs to the cyanase family.

It carries out the reaction cyanate + hydrogencarbonate + 3 H(+) = NH4(+) + 2 CO2. Its function is as follows. Catalyzes the reaction of cyanate with bicarbonate to produce ammonia and carbon dioxide. In Mycolicibacterium vanbaalenii (strain DSM 7251 / JCM 13017 / BCRC 16820 / KCTC 9966 / NRRL B-24157 / PYR-1) (Mycobacterium vanbaalenii), this protein is Cyanate hydratase.